Reading from the N-terminus, the 132-residue chain is UPF0292 protein PH1700 (132 aa).

The Toprim domain occupies 20-100; that stretch reads EGAIIVEGAR…KVDTETRREL (81 aa). 3 residues coordinate Mg(2+): glutamate 26, aspartate 69, and aspartate 71.

The protein belongs to the UPF0292 family. Mg(2+) is required as a cofactor.

In Pyrococcus horikoshii (strain ATCC 700860 / DSM 12428 / JCM 9974 / NBRC 100139 / OT-3), this protein is UPF0292 protein PH1700.